An 83-amino-acid polypeptide reads, in one-letter code: Alpha-neurotoxin NTX-1 (83 aa).

Residues methionine 1–threonine 21 form the signal peptide. Cystine bridges form between cysteine 24–cysteine 45, cysteine 38–cysteine 62, cysteine 64–cysteine 75, and cysteine 76–cysteine 81.

This sequence belongs to the three-finger toxin family. Short-chain subfamily. Type I alpha-neurotoxin sub-subfamily. Expressed by the venom gland.

Its subcellular location is the secreted. Binds to muscle nicotinic acetylcholine receptor (nAChR) and inhibit acetylcholine from binding to the receptor, thereby impairing neuromuscular transmission. The chain is Alpha-neurotoxin NTX-1 from Naja sputatrix (Malayan spitting cobra).